A 382-amino-acid polypeptide reads, in one-letter code: Putative 12-oxophytodienoate reductase 3 (382 aa).

FMN-binding positions include proline 37–threonine 39, alanine 70, and glutamine 112. Polar residues predominate over residues serine 120–glutamine 138. Residues serine 120–valine 147 form a disordered region. Histidine 184–histidine 187 is a substrate binding site. Tyrosine 189 serves as the catalytic Proton donor. Arginine 236 is an FMN binding site. Arginine 277 serves as a coordination point for substrate. Residues glycine 307 and glycine 328–arginine 329 each bind FMN.

Belongs to the NADH:flavin oxidoreductase/NADH oxidase family. FMN is required as a cofactor.

Putative oxophytodienoate reductase that may be involved in the biosynthesis or metabolism of oxylipin signaling molecules. This Oryza sativa subsp. japonica (Rice) protein is Putative 12-oxophytodienoate reductase 3 (OPR3).